A 377-amino-acid polypeptide reads, in one-letter code: Heat stress transcription factor B-2b (377 aa).

Residues 1–56 (MPGEQTGETPTVAGVGGGGAGCSAGNSGGSSGCGAGGGGGGSGGGGGGGGDSQRSI) are disordered. A compositionally biased stretch (gly residues) spans 14–51 (GVGGGGAGCSAGNSGGSSGCGAGGGGGGSGGGGGGGGD). Residues 57–151 (PTPFLTKTYQ…LLRDIQRRKI (95 aa)) mediate DNA binding. The tract at residues 220–265 (TTSCTTAPELVEENERLRKDNERLRKEMTKLKGLYANIYTLMANFT) is hydrophobic repeat HR-A/B. Positions 323 to 327 (KRARR) match the Nuclear localization signal motif. Positions 326-377 (RREEELGAAEEEDDDRREAAAQEGEQSSDVKAEPMEENNSGNHNGSWLELGK) are disordered. The span at 331 to 340 (LGAAEEEDDD) shows a compositional bias: acidic residues.

This sequence belongs to the HSF family. Class B subfamily. In terms of assembly, homotrimer. Exhibits temperature-dependent phosphorylation.

It localises to the nucleus. In terms of biological role, transcriptional regulator that specifically binds DNA sequence 5'-AGAAnnTTCT-3' known as heat shock promoter elements (HSE). The sequence is that of Heat stress transcription factor B-2b (HSFB2B) from Arabidopsis thaliana (Mouse-ear cress).